Here is a 194-residue protein sequence, read N- to C-terminus: MSTTIDIPESSKVVKGKGVVAAPLRPGGWKKGVAIMDFILRLGAIAAALGAAATMGTSDQTLPFFTQFFQFEASYDSFTTFQFFVITMALVGGYLVLSLPFSVVAIIRPHAVGPRLFLIILDTVFLTLATASAASAAAVVYLAHNGDQDTNWLAICNQFGDFCAQTSSAVVSSFVAVVVFVLLIVMSALAMGKP.

Topologically, residues 1 to 32 (MSTTIDIPESSKVVKGKGVVAAPLRPGGWKKG) are cytoplasmic. The chain crosses the membrane as a helical span at residues 33–53 (VAIMDFILRLGAIAAALGAAA). At 54-82 (TMGTSDQTLPFFTQFFQFEASYDSFTTFQ) the chain is on the extracellular side. The chain crosses the membrane as a helical span at residues 83 to 103 (FFVITMALVGGYLVLSLPFSV). Over 104 to 115 (VAIIRPHAVGPR) the chain is Cytoplasmic. The chain crosses the membrane as a helical span at residues 116–136 (LFLIILDTVFLTLATASAASA). At 137–168 (AAVVYLAHNGDQDTNWLAICNQFGDFCAQTSS) the chain is on the extracellular side. Residues 169–189 (AVVSSFVAVVVFVLLIVMSAL) traverse the membrane as a helical segment. At 190-194 (AMGKP) the chain is on the cytoplasmic side.

It belongs to the Casparian strip membrane proteins (CASP) family. In terms of assembly, homodimer and heterodimers.

Its subcellular location is the cell membrane. In terms of biological role, regulates membrane-cell wall junctions and localized cell wall deposition. Required for establishment of the Casparian strip membrane domain (CSD) and the subsequent formation of Casparian strips, a cell wall modification of the root endodermis that determines an apoplastic barrier between the intraorganismal apoplasm and the extraorganismal apoplasm and prevents lateral diffusion. This chain is Casparian strip membrane protein 2, found in Vigna unguiculata (Cowpea).